The primary structure comprises 389 residues: 26S proteasome regulatory subunit 10B (389 aa).

Lys72 carries the post-translational modification N6-acetyllysine. Gly174–Thr181 is an ATP binding site. N6-acetyllysine is present on Lys206. Ser244 is modified (phosphoserine).

It belongs to the AAA ATPase family. Component of the 19S proteasome regulatory particle complex. The 26S proteasome consists of a 20S core particle (CP) and two 19S regulatory subunits (RP). The regulatory particle is made of a lid composed of 9 subunits, a base containing 6 ATPases including PSMC6 and few additional components. Interacts with PAAF1.

It is found in the cytoplasm. The protein resides in the nucleus. Its function is as follows. Component of the 26S proteasome, a multiprotein complex involved in the ATP-dependent degradation of ubiquitinated proteins. This complex plays a key role in the maintenance of protein homeostasis by removing misfolded or damaged proteins, which could impair cellular functions, and by removing proteins whose functions are no longer required. Therefore, the proteasome participates in numerous cellular processes, including cell cycle progression, apoptosis, or DNA damage repair. PSMC6 belongs to the heterohexameric ring of AAA (ATPases associated with diverse cellular activities) proteins that unfolds ubiquitinated target proteins that are concurrently translocated into a proteolytic chamber and degraded into peptides. The chain is 26S proteasome regulatory subunit 10B (PSMC6) from Bos taurus (Bovine).